The following is a 384-amino-acid chain: Alkanesulfonate monooxygenase (384 aa).

It belongs to the SsuD family.

The enzyme catalyses an alkanesulfonate + FMNH2 + O2 = an aldehyde + FMN + sulfite + H2O + 2 H(+). Catalyzes the desulfonation of aliphatic sulfonates. The sequence is that of Alkanesulfonate monooxygenase from Burkholderia thailandensis (strain ATCC 700388 / DSM 13276 / CCUG 48851 / CIP 106301 / E264).